The primary structure comprises 155 residues: SsrA-binding protein (155 aa).

Belongs to the SmpB family.

It localises to the cytoplasm. Functionally, required for rescue of stalled ribosomes mediated by trans-translation. Binds to transfer-messenger RNA (tmRNA), required for stable association of tmRNA with ribosomes. tmRNA and SmpB together mimic tRNA shape, replacing the anticodon stem-loop with SmpB. tmRNA is encoded by the ssrA gene; the 2 termini fold to resemble tRNA(Ala) and it encodes a 'tag peptide', a short internal open reading frame. During trans-translation Ala-aminoacylated tmRNA acts like a tRNA, entering the A-site of stalled ribosomes, displacing the stalled mRNA. The ribosome then switches to translate the ORF on the tmRNA; the nascent peptide is terminated with the 'tag peptide' encoded by the tmRNA and targeted for degradation. The ribosome is freed to recommence translation, which seems to be the essential function of trans-translation. This Alkaliphilus oremlandii (strain OhILAs) (Clostridium oremlandii (strain OhILAs)) protein is SsrA-binding protein.